The following is a 417-amino-acid chain: Phosphoglycerate kinase 1 (417 aa).

Residue serine 2 is modified to N-acetylserine. A phosphoserine mark is found at serine 2 and serine 4. N6-succinyllysine is present on lysine 6. The residue at position 11 (lysine 11) is an N6-acetyllysine. Residues valine 23, aspartate 24, phenylalanine 25, asparagine 26, glutamine 38, and arginine 39 each coordinate (2R)-3-phosphoglycerate. A mitochondrial targeting region exposed following cis-trans isomerization by PIN1 and recognized by the TOM complex for mitochondrial translocation of the protein region spans residues 38-43 (QRIKAA). Residue lysine 48 is modified to N6-acetyllysine; alternate. An N6-succinyllysine; alternate modification is found at lysine 48. Residues serine 62, histidine 63, glycine 65, and arginine 66 each coordinate (2R)-3-phosphoglycerate. Lysine 75 carries the N6-acetyllysine modification. Tyrosine 76 carries the post-translational modification Phosphotyrosine. Residues lysine 86 and lysine 91 each carry the N6-acetyllysine modification. Position 97 is an N6-acetyllysine; alternate (lysine 97). At lysine 97 the chain carries N6-(2-hydroxyisobutyryl)lysine; alternate. The (2R)-3-phosphoglycerate site is built by leucine 122 and arginine 123. Lysine 131 carries the N6-acetyllysine; alternate modification. An N6-malonyllysine; alternate modification is found at lysine 131. Position 146 is an N6-acetyllysine (lysine 146). Residues histidine 170 and arginine 171 each coordinate (2R)-3-phosphoglycerate. At lysine 191 the chain carries N6-succinyllysine. Tyrosine 196 is modified (phosphotyrosine). Lysine 199 is subject to N6-acetyllysine. Serine 203 is modified (phosphoserine). Glycine 214 is a binding site for ADP. Glycine 214 lines the CDP pocket. 2 residues coordinate AMP: alanine 215 and lysine 216. Alanine 215 contacts ATP. Residue alanine 215 coordinates Mg(2+). Position 216 is an N6-(2-hydroxyisobutyryl)lysine (lysine 216). Mg(2+) is bound by residues alanine 218 and aspartate 219. Residue aspartate 219 coordinates CDP. Lysine 220 contacts AMP. Lysine 220 provides a ligand contact to ATP. Lysine 220 is subject to N6-(2-hydroxyisobutyryl)lysine. Glycine 238 lines the ADP pocket. Glycine 238 lines the CDP pocket. Glycine 239 serves as a coordination point for AMP. Glycine 239 is an ATP binding site. N6-acetyllysine occurs at positions 267 and 291. AMP is bound at residue glycine 313. Glycine 313 contributes to the ATP binding site. Lysine 323 carries the N6-(2-hydroxyisobutyryl)lysine modification. Glycine 338, valine 340, and phenylalanine 343 together coordinate CDP. Phenylalanine 343 provides a ligand contact to ADP. AMP is bound at residue glutamate 344. ATP is bound at residue glutamate 344. Lysine 361 is modified (N6-acetyllysine). ATP is bound by residues aspartate 375 and threonine 376. Residue aspartate 375 coordinates Mg(2+).

The protein belongs to the phosphoglycerate kinase family. In terms of assembly, monomer. Interacts with kinase MAPK1/ERK2; the interaction is direct, occurs under hypoxic conditions, and promotes its interaction with PIN1. Interacts with peptidyl-prolyl cis-trans isomerase PIN1; the interaction is direct, occurs under hypoxic conditions, and targets the protein to the mitochondrion by promoting interactions with the TOM complex. Interacts with mitochondrial circRNA mcPGK1 (via its 2nd stem-loop); the interaction is direct and targets the protein to the mitochondrion by promoting interactions with the TOM complex. Interacts with pyruvate dehydrogenase kinase PDK1; the interaction is direct, occurs under hypoxic conditions and leads to PDK1-mediated inhibition of pyruvate dehydrogenase complex activity. Mg(2+) is required as a cofactor. Phosphorylated at Ser-203 by MAPK1/ERK2 under hypoxic conditions, which promotes its mitochondrial targeting. Testis, lung, brain, skeletal muscle, liver, intestine, and kidney (at protein level).

It localises to the cytoplasm. The protein resides in the cytosol. The protein localises to the mitochondrion matrix. It carries out the reaction (2R)-3-phosphoglycerate + ATP = (2R)-3-phospho-glyceroyl phosphate + ADP. The enzyme catalyses L-seryl-[protein] + ATP = O-phospho-L-seryl-[protein] + ADP + H(+). The protein operates within carbohydrate degradation; glycolysis; pyruvate from D-glyceraldehyde 3-phosphate: step 2/5. In terms of biological role, catalyzes one of the two ATP producing reactions in the glycolytic pathway via the reversible conversion of 1,3-diphosphoglycerate to 3-phosphoglycerate. Both L- and D- forms of purine and pyrimidine nucleotides can be used as substrates, but the activity is much lower on pyrimidines. In addition to its role as a glycolytic enzyme, it seems that PGK-1 acts as a polymerase alpha cofactor protein (primer recognition protein). Acts as a protein kinase when localized to the mitochondrion where it phosphorylates pyruvate dehydrogenase kinase PDK1 to inhibit pyruvate dehydrogenase complex activity and suppress the formation of acetyl-coenzyme A from pyruvate, and consequently inhibit oxidative phosphorylation and promote glycolysis. May play a role in sperm motility. In Mus musculus (Mouse), this protein is Phosphoglycerate kinase 1 (Pgk1).